Reading from the N-terminus, the 97-residue chain is Co-chaperonin GroES (97 aa).

Belongs to the GroES chaperonin family. As to quaternary structure, heptamer of 7 subunits arranged in a ring. Interacts with the chaperonin GroEL.

Its subcellular location is the cytoplasm. Its function is as follows. Together with the chaperonin GroEL, plays an essential role in assisting protein folding. The GroEL-GroES system forms a nano-cage that allows encapsulation of the non-native substrate proteins and provides a physical environment optimized to promote and accelerate protein folding. GroES binds to the apical surface of the GroEL ring, thereby capping the opening of the GroEL channel. The sequence is that of Co-chaperonin GroES from Sodalis glossinidius (strain morsitans).